Consider the following 511-residue polypeptide: Chromosomal replication initiator protein DnaA (511 aa).

Positions 1–87 are domain I, interacts with DnaA modulators; sequence MSVELWQQCV…IGSKRSSAPR (87 aa). Residues 87 to 174 are domain II; sequence RAAPNAPLAA…QVEGALKHTS (88 aa). The segment at 133–160 is disordered; the sequence is VATHDEPSRDSFDPMAGASSQQAPARAE. The span at 134–144 shows a compositional bias: basic and acidic residues; it reads ATHDEPSRDSF. The interval 175–391 is domain III, AAA+ region; that stretch reads YLNRTFTFEN…GALKRVIAHS (217 aa). Residues Gly-219, Gly-221, Lys-222, and Thr-223 each coordinate ATP. Residues 392–511 are domain IV, binds dsDNA; that stretch reads HFMGRDITIE…YKNLLRTLTT (120 aa).

This sequence belongs to the DnaA family. As to quaternary structure, oligomerizes as a right-handed, spiral filament on DNA at oriC.

The protein localises to the cytoplasm. In terms of biological role, plays an essential role in the initiation and regulation of chromosomal replication. ATP-DnaA binds to the origin of replication (oriC) to initiate formation of the DNA replication initiation complex once per cell cycle. Binds the DnaA box (a 9 base pair repeat at the origin) and separates the double-stranded (ds)DNA. Forms a right-handed helical filament on oriC DNA; dsDNA binds to the exterior of the filament while single-stranded (ss)DNA is stabiized in the filament's interior. The ATP-DnaA-oriC complex binds and stabilizes one strand of the AT-rich DNA unwinding element (DUE), permitting loading of DNA polymerase. After initiation quickly degrades to an ADP-DnaA complex that is not apt for DNA replication. Binds acidic phospholipids. This chain is Chromosomal replication initiator protein DnaA, found in Pseudomonas syringae pv. tomato (strain ATCC BAA-871 / DC3000).